We begin with the raw amino-acid sequence, 626 residues long: tRNA uridine 5-carboxymethylaminomethyl modification enzyme MnmG (626 aa).

13–18 (GGGHAG) serves as a coordination point for FAD. 273–287 (GPRYCPSIEDKIHRF) is an NAD(+) binding site.

This sequence belongs to the MnmG family. In terms of assembly, homodimer. Heterotetramer of two MnmE and two MnmG subunits. The cofactor is FAD.

Its subcellular location is the cytoplasm. NAD-binding protein involved in the addition of a carboxymethylaminomethyl (cmnm) group at the wobble position (U34) of certain tRNAs, forming tRNA-cmnm(5)s(2)U34. The polypeptide is tRNA uridine 5-carboxymethylaminomethyl modification enzyme MnmG (Acinetobacter baumannii (strain AB307-0294)).